The primary structure comprises 627 residues: Pescadillo homolog (627 aa).

The 94-residue stretch at 321-414 (RLRTLFKGLK…QLLPTNKYFI (94 aa)) folds into the BRCT domain. Disordered regions lie at residues 436-471 (PEEK…AVDQ), 489-562 (YKKY…LQAR), and 596-627 (FEAG…KLGK). Residues serine 453 and serine 457 each carry the phosphoserine modification. Composition is skewed to acidic residues over residues 453–471 (SDDD…AVDQ) and 498–521 (VNED…EELD). The span at 522 to 533 (EQAKRLKEEKQK) shows a compositional bias: basic and acidic residues. Residues 540–549 (KVHKVNKRQL) show a composition bias toward basic residues. Basic and acidic residues-rich tracts occupy residues 550 to 559 (HKAEVDEHRL) and 596 to 605 (FEAGEKEARK). The segment covering 616 to 627 (AAAAAKASKLGK) has biased composition (low complexity).

Belongs to the pescadillo family.

Its subcellular location is the nucleus. It is found in the nucleolus. It localises to the nucleoplasm. Required for maturation of ribosomal RNAs and formation of the large ribosomal subunit. This Drosophila ananassae (Fruit fly) protein is Pescadillo homolog.